A 73-amino-acid chain; its full sequence is UPF0270 protein PMI2817 (73 aa).

It belongs to the UPF0270 family.

The polypeptide is UPF0270 protein PMI2817 (Proteus mirabilis (strain HI4320)).